The sequence spans 157 residues: uncharacterized protein (157 aa).

The N-acetyltransferase domain maps to 9-146 (LLINYKTLDE…GDFYVWHPET (138 aa)).

This is an uncharacterized protein from Bacillus cereus (strain AH187).